Reading from the N-terminus, the 278-residue chain is Probable endonuclease 4 (278 aa).

The Zn(2+) site is built by H69, H109, E145, D179, H182, H216, D229, H231, and E261.

The protein belongs to the AP endonuclease 2 family. Requires Zn(2+) as cofactor.

The enzyme catalyses Endonucleolytic cleavage to 5'-phosphooligonucleotide end-products.. Endonuclease IV plays a role in DNA repair. It cleaves phosphodiester bonds at apurinic or apyrimidinic (AP) sites, generating a 3'-hydroxyl group and a 5'-terminal sugar phosphate. This is Probable endonuclease 4 from Buchnera aphidicola subsp. Baizongia pistaciae (strain Bp).